A 64-amino-acid polypeptide reads, in one-letter code: Anti-sigma-G factor Gin (64 aa).

Zn(2+) is bound by residues cysteine 11, cysteine 14, cysteine 30, and cysteine 33.

In terms of assembly, probably functions as a homodimer. Interacts with sigma-G factor, recognition occurs via the first 71 residues of sigma-G. Requires Zn(2+) as cofactor.

Functionally, an anti-sigma-G factor, prevents premature activation of sigma-G factor in the forespore; overexpression leads to 1000-fold reduction in spore formation, spore formation stops after engulfment. Overexpression also inhibits sigma-G transcription activation activity. When both Gin and sigma-G are expressed in E.coli Gin inhibits sigma-G, strongly suggesting Gin inhibits by direct physical interaction. The polypeptide is Anti-sigma-G factor Gin (Bacillus subtilis (strain 168)).